The sequence spans 260 residues: ATP synthase subunit a (260 aa).

6 helical membrane-spanning segments follow: residues 37–57 (FTNA…FMTL), 95–115 (FFPF…IGMF), 125–145 (IVVT…TGFV), 154–174 (VFVP…IEII), 191–211 (MLAG…FMTM), and 233–253 (EFLV…MYLH).

The protein belongs to the ATPase A chain family. F-type ATPases have 2 components, CF(1) - the catalytic core - and CF(0) - the membrane proton channel. CF(1) has five subunits: alpha(3), beta(3), gamma(1), delta(1), epsilon(1). CF(0) has three main subunits: a(1), b(2) and c(9-12). The alpha and beta chains form an alternating ring which encloses part of the gamma chain. CF(1) is attached to CF(0) by a central stalk formed by the gamma and epsilon chains, while a peripheral stalk is formed by the delta and b chains.

It localises to the cell inner membrane. Key component of the proton channel; it plays a direct role in the translocation of protons across the membrane. This chain is ATP synthase subunit a, found in Parvibaculum lavamentivorans (strain DS-1 / DSM 13023 / NCIMB 13966).